Reading from the N-terminus, the 276-residue chain is CTD small phosphatase-like protein (276 aa).

A disordered region spans residues 1–25 (MDGPAIITQVTNPKEDEGRLPGAGE). One can recognise an FCP1 homology domain in the interval 102 to 260 (LDYGKKCVVI…LDLIPFFEGL (159 aa)). The 4-aspartylphosphate intermediate role is filled by aspartate 112. 3 residues coordinate Mg(2+): aspartate 112, aspartate 114, and asparagine 223. Aspartate 114 functions as the Proton donor in the catalytic mechanism.

As to quaternary structure, interacts with REST. Monomer. Requires Mg(2+) as cofactor. In terms of tissue distribution, expression is restricted to non-neuronal tissues.

The protein localises to the nucleus. It catalyses the reaction O-phospho-L-seryl-[protein] + H2O = L-seryl-[protein] + phosphate. It carries out the reaction O-phospho-L-threonyl-[protein] + H2O = L-threonyl-[protein] + phosphate. In terms of biological role, recruited by REST to neuronal genes that contain RE-1 elements, leading to neuronal gene silencing in non-neuronal cells. Preferentially catalyzes the dephosphorylation of 'Ser-5' within the tandem 7 residue repeats in the C-terminal domain (CTD) of the largest RNA polymerase II subunit POLR2A. Negatively regulates RNA polymerase II transcription, possibly by controlling the transition from initiation/capping to processive transcript elongation. In Homo sapiens (Human), this protein is CTD small phosphatase-like protein (CTDSPL).